The primary structure comprises 409 residues: Nucleoprotein (409 aa).

Disordered regions lie at residues 1–32 (MASGKATGKTDAPAPVIKLGGPKPPKVGSSGN), 45–69 (NSHPPKFEGSGVPDNENLKTSQQHG), 122–145 (DVKSRSHQGTRDPDKFDQYPLRFS), 164–194 (RSGRSTAASSAASSRAPSRDGSRGRRSGSED), and 238–259 (VDQVFGPRTKGKEGNFGDDKMN). Over residues 15–31 (PVIKLGGPKPPKVGSSG) the composition is skewed to low complexity. An RNA-binding region spans residues 29–160 (SSGNASWFQA…GNFRWDFIPL (132 aa)). The CoV N NTD domain maps to 31 to 156 (GNASWFQAIK…GGPDGNFRWD (126 aa)). Residues 122–138 (DVKSRSHQGTRDPDKFD) show a composition bias toward basic and acidic residues. Residues 164–179 (RSGRSTAASSAASSRA) are compositionally biased toward low complexity. Basic and acidic residues-rich tracts occupy residues 180–192 (PSRDGSRGRRSGS) and 247–259 (KGKEGNFGDDKMN). Phosphoserine; by host occurs at positions 190 and 192. The region spanning 219-331 (ADEMAHRRYC…QCVDGVGTRP (113 aa)) is the CoV N CTD domain. The tract at residues 226 to 333 (RYCKRTIPPG…VDGVGTRPKD (108 aa)) is dimerization. Cysteine 320 and cysteine 323 are disulfide-bonded. The tract at residues 326–409 (GVGTRPKDDE…GDSALGENEL (84 aa)) is disordered. The segment covering 341-357 (RSSSRPATRTSSPAPRQ) has biased composition (low complexity). The segment covering 358 to 367 (QRPKKEKKPK) has biased composition (basic residues). Threonine 378 is modified (phosphothreonine; by host). Residue serine 379 is modified to Phosphoserine; by host.

It belongs to the gammacoronavirus nucleocapsid protein family. In terms of assembly, homooligomer. Both monomeric and oligomeric forms interact with RNA. Interacts with protein M. Interacts with NSP3; this interaction serves to tether the genome to the newly translated replicase-transcriptase complex at a very early stage of infection. ADP-ribosylated. The ADP-ribosylation is retained in the virion during infection. In terms of processing, phosphorylated on serine and threonine residues.

The protein resides in the virion. It localises to the host endoplasmic reticulum-Golgi intermediate compartment. Its subcellular location is the host Golgi apparatus. Its function is as follows. Packages the positive strand viral genome RNA into a helical ribonucleocapsid (RNP) and plays a fundamental role during virion assembly through its interactions with the viral genome and membrane protein M. Plays an important role in enhancing the efficiency of subgenomic viral RNA transcription as well as viral replication. The polypeptide is Nucleoprotein (Avian infectious bronchitis virus (strain Arkansas 99) (IBV)).